The chain runs to 173 residues: Sterile alpha motif domain-containing protein 5 (173 aa).

In terms of domain architecture, SAM spans 1-65; sequence MCTNIVYEWL…LEAVRRLREQ (65 aa). Residues 75 to 119 are disordered; it reads TLEPQPAPPGPPADAVPTGRRGEPCGGPAQGTRGDSRGHTTAPRS. Positions 79–88 are enriched in pro residues; sequence QPAPPGPPAD.

As to quaternary structure, interacts promiscuously (via SAM domain) with EPHA5, EPHA6, EPHA7, EPHA8, EPHB1, EPHB2, EPHB3 and EPHB4 (via SAM domain) (in vitro). Detected in biliary epithelial cells on bile ducts at the hepatic hilum (at protein level).

It is found in the cytoplasm. In Homo sapiens (Human), this protein is Sterile alpha motif domain-containing protein 5 (SAMD5).